The sequence spans 298 residues: Cyclin-dependent kinase 2 homolog (298 aa).

Residues 4–284 enclose the Protein kinase domain; sequence YHKMEKIGEG…AKEALKHDYF (281 aa). Residues 10-18 and lysine 32 contribute to the ATP site; that span reads IGEGTYGVV. Position 14 is a phosphothreonine (threonine 14). Tyrosine 15 carries the post-translational modification Phosphotyrosine. Aspartate 125 (proton acceptor) is an active-site residue. Threonine 158 carries the post-translational modification Phosphothreonine.

It belongs to the protein kinase superfamily. CMGC Ser/Thr protein kinase family. CDC2/CDKX subfamily. In terms of assembly, may form a complex composed of at least the catalytic subunit CRK2 and a cyclin. Requires Mg(2+) as cofactor.

It is found in the cytoplasm. It catalyses the reaction L-seryl-[protein] + ATP = O-phospho-L-seryl-[protein] + ADP + H(+). The catalysed reaction is L-threonyl-[protein] + ATP = O-phospho-L-threonyl-[protein] + ADP + H(+). It carries out the reaction [DNA-directed RNA polymerase] + ATP = phospho-[DNA-directed RNA polymerase] + ADP + H(+). Its activity is regulated as follows. Phosphorylation at Thr-14 or Tyr-15 inactivates the enzyme, while phosphorylation at Thr-158 activates it. Functionally, serine/threonine-protein kinase. Involved in the control of the cell cycle. Required for entry into S-phase and mitosis. Probable component of the kinase complex that phosphorylates the repetitive C-terminus of RNA polymerase II. This Theileria annulata protein is Cyclin-dependent kinase 2 homolog.